We begin with the raw amino-acid sequence, 820 residues long: Cation/H(+) antiporter 17 (820 aa).

The next 12 membrane-spanning stretches (helical) occupy residues 30-50, 58-75, 90-110, 124-144, 159-179, 192-212, 222-242, 276-296, 313-333, 342-362, 374-394, and 404-424; these read LPLLILQICIVLLLTRLLAFL, RVIAEIVGGILLGPSALG, LTVLDTLANLGLIFFLFLVGL, ALSIALAGITLPFVLGIGTSF, FLVFMGVALSITAFPVLARIL, IALSAAAVNDVAAWILLALAV, LTSLWVFLSGCGFVLFCIFVV, FVTDFIGIHALFGAFVIGVIF, LVSGLFLPLYFVSSGLKTNVA, GLLVLVIFNACFGKIIGTVLV, LALGFLMNTKGLVELIVLNIG, and IFAIMVLMAIFTTFMTTPLVL. Residues Ser817 and Ser819 each carry the phosphoserine modification.

Belongs to the monovalent cation:proton antiporter 2 (CPA2) transporter (TC 2.A.37) family. CHX (TC 2.A.37.4) subfamily. As to expression, predominantly expressed in epidermal and cortical cells of mature roots but also barely detected in leaves.

It localises to the membrane. In terms of biological role, operates as a K(+)/H(+) antiporter that controls K(+) acquisition and homeostasis. This Arabidopsis thaliana (Mouse-ear cress) protein is Cation/H(+) antiporter 17 (CHX17).